The primary structure comprises 353 residues: GDSL esterase/lipase At5g03810 (353 aa).

The signal sequence occupies residues 1–24; it reads MKMFITMSMCLSVIACFYAGVGTG. Catalysis depends on S37, which acts as the Nucleophile. 5 N-linked (GlcNAc...) asparagine glycosylation sites follow: N100, N255, N256, N260, and N320. Catalysis depends on residues D328 and H331.

Belongs to the 'GDSL' lipolytic enzyme family.

It is found in the secreted. The protein is GDSL esterase/lipase At5g03810 of Arabidopsis thaliana (Mouse-ear cress).